Consider the following 1115-residue polypeptide: Neural cell adhesion molecule 1 (1115 aa).

The N-terminal stretch at 1-19 is a signal peptide; that stretch reads MLRTKDLIWTLFFLGTAVS. 5 consecutive Ig-like C2-type domains span residues 20–111, 116–205, 212–302, 309–402, and 407–492; these read LQVD…ATVN, QKLM…KDIQ, PTVQ…ASIH, PKIT…MYLE, and PKLQ…ESLE. Topologically, residues 20 to 711 are extracellular; sequence LQVDIVPSQG…NGSPTAGLST (692 aa). Intrachain disulfides connect Cys41–Cys96 and Cys139–Cys189. Heparin contacts are provided by residues 152–156 and 161–165; these read KHKGR and KKDVR. Asn222 carries an N-linked (GlcNAc...) asparagine; partial glycan. A disulfide bond links Cys235 and Cys288. N-linked (GlcNAc...) asparagine glycans are attached at residues Asn316, Asn348, Asn424, Asn450, and Asn479. Cys330 and Cys386 are joined by a disulfide. Cysteines 427 and 480 form a disulfide. Fibronectin type-III domains lie at 500 to 599 and 601 to 696; these read TPSS…TQPV and EPSA…SAQP. Thr706 is lipidated: GPI-anchor amidated serine. Residues 712–729 traverse the membrane as a helical segment; the sequence is GAIVGILIVIFVLLLVVM. Over 730 to 1115 the chain is Cytoplasmic; the sequence is DITCYFLNKC…TQTKENESKA (386 aa). 3 disordered regions span residues 756-809, 839-912, and 924-1115; these read GAKG…TEPE, FATA…SASN, and VLSP…ESKA. The segment covering 758 to 799 has biased composition (basic and acidic residues); that stretch reads KGKDMEEGKAAFSKDESKEPIVEVRTEEERTPNHDGGKHTEP. Residues Ser770 and Ser774 each carry the phosphoserine modification. 3 stretches are compositionally biased toward low complexity: residues 800 to 809, 845 to 856, and 876 to 896; these read NETTPLTEPE, SPTSETTTLTSS, and TPSK…KVAP. A phosphoserine mark is found at Ser887 and Ser890. Polar residues-rich tracts occupy residues 902–912 and 926–935; these read DTPTSAPSASN and SPSTPASAGE. Ser926 carries the post-translational modification Phosphoserine. Residue Thr929 is modified to Phosphothreonine. Low complexity-rich tracts occupy residues 936–974 and 999–1012; these read TSKA…PQAK and AATA…KAAT. Phosphoserine is present on residues Ser946 and Ser958. Residue Thr1001 is modified to Phosphothreonine. Residue Ser1005 is modified to Phosphoserine. Basic and acidic residues-rich tracts occupy residues 1019 to 1037 and 1074 to 1091; these read EDLK…DLAK and KTEK…ESEA. Thr1030 carries the post-translational modification Phosphothreonine.

In terms of assembly, interacts with MDK. Found in a complex with SLC39A6, SLC39A10 and with NCAM1; this complex controls NCAM1 phosphorylation and integration into focal adhesion complexes during epithelial-tomesenchymal transition. Interacts with synaptic plasticity regulator PANTS. In terms of processing, polysialylated by ST8SIA2 and ST8SIA4. Polysialylation modulates cell interactions by confering both attractive and repulsive properties that are highly regulated by ST8SIA2 and ST8SIA4. Polysialylation is formed on a-2,3-linked sialic acid of core glycans.

Its subcellular location is the cell membrane. This protein is a cell adhesion molecule involved in neuron-neuron adhesion, neurite fasciculation, outgrowth of neurites, etc. The chain is Neural cell adhesion molecule 1 from Mus musculus (Mouse).